Consider the following 345-residue polypeptide: N-glycosylase/DNA lyase (345 aa).

DNA is bound by residues Asn149, Arg154, and Arg204. The active-site Schiff-base intermediate with DNA is the Lys249. Residues Pro266 and Asp268 each contribute to the 8-oxoguanine site. DNA contacts are provided by His270 and Gln287. The 8-oxoguanine site is built by Gln315 and Phe319. Residues Arg324 to Ala334 are compositionally biased toward basic and acidic residues. Residues Arg324–Gly345 form a disordered region. Over residues Lys335–Gly345 the composition is skewed to basic residues.

This sequence belongs to the type-1 OGG1 family. In terms of tissue distribution, ubiquitous.

It localises to the nucleus. It is found in the nucleoplasm. The protein resides in the nucleus speckle. Its subcellular location is the nucleus matrix. The protein localises to the mitochondrion. It catalyses the reaction 2'-deoxyribonucleotide-(2'-deoxyribose 5'-phosphate)-2'-deoxyribonucleotide-DNA = a 3'-end 2'-deoxyribonucleotide-(2,3-dehydro-2,3-deoxyribose 5'-phosphate)-DNA + a 5'-end 5'-phospho-2'-deoxyribonucleoside-DNA + H(+). In terms of biological role, DNA repair enzyme that incises DNA at 8-oxoG residues. Excises 7,8-dihydro-8-oxoguanine and 2,6-diamino-4-hydroxy-5-N-methylformamidopyrimidine (FAPY) from damaged DNA. Has a beta-lyase activity that nicks DNA 3' to the lesion. The sequence is that of N-glycosylase/DNA lyase (OGG1) from Homo sapiens (Human).